The following is a 172-amino-acid chain: Light-harvesting complex-like protein OHP2, chloroplastic (172 aa).

Residues 1–43 constitute a chloroplast transit peptide; it reads MSVASPIQCIRILNPSSSSSSSTASSSFRFSTTTKPCVFIIRC. Topologically, residues 44 to 135 are stromal; it reads SQTEGPLRRP…QPKNEISNGR (92 aa). The segment at 45-90 is disordered; it reads QTEGPLRRPSAPPTLREPQKPVPPSQPSSSPPPSPPPQKAVAVDGK. The span at 64-82 shows a compositional bias: pro residues; it reads KPVPPSQPSSSPPPSPPPQ. The helical transmembrane segment at 136–156 threads the bilayer; sequence WAMFGFAVGMLTEYATGSDLV. The Lumenal portion of the chain corresponds to 157–172; that stretch reads DQVKILLSNFGILDLE.

This sequence belongs to the ELIP/psbS family. As to quaternary structure, component of a high molecular weight complex containing OHP1, OHP2 and HCF244, and PSII core proteins D1/D2, HCF136 and HCF173. Forms a trimeric complex with OHP1 and HCF244 that mutually stabilizes each subunit.

It is found in the plastid. The protein resides in the chloroplast thylakoid membrane. Its function is as follows. May play a photoprotective role within PSI in response to light stress. Forms a trimeric complex with OHP1 and HCF244 that is required to promote PSII core subunit assembly. The trimeric complex forms a transient PSII reaction center-like complex with PsbA, PsbD, PsbE, PsbF and PsbI subunits in thylakoids for early assembly of PSII as well as PSII repair. The trimeric complex is required for the recruitment of ribosomes to the psbA mRNA during PSII biogenesis and repair. Forms a heterodimer with OHP1 that binds chlorophylls and carotenoids, and that may function in the delivery of pigments to the PsbA subunit of PSII. The chain is Light-harvesting complex-like protein OHP2, chloroplastic from Arabidopsis thaliana (Mouse-ear cress).